A 716-amino-acid polypeptide reads, in one-letter code: UvrABC system protein C (716 aa).

The region spanning 14–94 is the GIY-YIG domain; it reads AEPGCYLMKD…IKRHRPRFNI (81 aa). Positions 206-241 constitute a UVR domain; the sequence is TELVERLHGRMDEAADALRFEDAARLRDQLQAVERS.

The protein belongs to the UvrC family. As to quaternary structure, interacts with UvrB in an incision complex.

Its subcellular location is the cytoplasm. Its function is as follows. The UvrABC repair system catalyzes the recognition and processing of DNA lesions. UvrC both incises the 5' and 3' sides of the lesion. The N-terminal half is responsible for the 3' incision and the C-terminal half is responsible for the 5' incision. The sequence is that of UvrABC system protein C from Anaeromyxobacter sp. (strain Fw109-5).